A 496-amino-acid polypeptide reads, in one-letter code: 3-octaprenyl-4-hydroxybenzoate carboxy-lyase (496 aa).

Asparagine 181 is a binding site for Mn(2+). Prenylated FMN is bound by residues 184 to 186 (IYR), 198 to 200 (RWL), and 203 to 204 (RG). A Mn(2+)-binding site is contributed by glutamate 247. Catalysis depends on aspartate 296, which acts as the Proton donor.

Belongs to the UbiD family. In terms of assembly, homohexamer. Requires prenylated FMN as cofactor. The cofactor is Mn(2+).

Its subcellular location is the cell membrane. The enzyme catalyses a 4-hydroxy-3-(all-trans-polyprenyl)benzoate + H(+) = a 2-(all-trans-polyprenyl)phenol + CO2. Its pathway is cofactor biosynthesis; ubiquinone biosynthesis. In terms of biological role, catalyzes the decarboxylation of 3-octaprenyl-4-hydroxy benzoate to 2-octaprenylphenol, an intermediate step in ubiquinone biosynthesis. The protein is 3-octaprenyl-4-hydroxybenzoate carboxy-lyase of Azoarcus sp. (strain BH72).